Reading from the N-terminus, the 61-residue chain is Bowman-Birk type proteinase inhibitor B5 (61 aa).

Cystine bridges form between Cys5/Cys60, Cys6/Cys22, Cys9/Cys56, Cys12/Cys20, Cys29/Cys36, and Cys33/Cys48.

This sequence belongs to the Bowman-Birk serine protease inhibitor family. As to expression, expressed in bulb (at protein level).

Functionally, serine protease inhibitor. Inhibits trypsin (Ki = 41 nM) and weakly inhibits chymotrypsin (Ki = 410 nM). Does not inhibit bacterial subtilisin. The chain is Bowman-Birk type proteinase inhibitor B5 from Hyacinthus orientalis (Common hyacinth).